Here is a 640-residue protein sequence, read N- to C-terminus: DNA gyrase subunit B (640 aa).

The 115-residue stretch at 423 to 537 (AELYIVEGDS…NGNIYIAQPP (115 aa)) folds into the Toprim domain. Residues glutamate 429, aspartate 502, and aspartate 504 each contribute to the Mg(2+) site.

The protein belongs to the type II topoisomerase GyrB family. Heterotetramer, composed of two GyrA and two GyrB chains. In the heterotetramer, GyrA contains the active site tyrosine that forms a transient covalent intermediate with DNA, while GyrB binds cofactors and catalyzes ATP hydrolysis. It depends on Mg(2+) as a cofactor. The cofactor is Mn(2+). Ca(2+) is required as a cofactor.

The protein resides in the cytoplasm. It carries out the reaction ATP-dependent breakage, passage and rejoining of double-stranded DNA.. Functionally, a type II topoisomerase that negatively supercoils closed circular double-stranded (ds) DNA in an ATP-dependent manner to modulate DNA topology and maintain chromosomes in an underwound state. Negative supercoiling favors strand separation, and DNA replication, transcription, recombination and repair, all of which involve strand separation. Also able to catalyze the interconversion of other topological isomers of dsDNA rings, including catenanes and knotted rings. Type II topoisomerases break and join 2 DNA strands simultaneously in an ATP-dependent manner. This chain is DNA gyrase subunit B, found in Spiroplasma citri.